The chain runs to 660 residues: DNA ligase (660 aa).

Residues 33-37, 82-83, and glutamate 110 contribute to the NAD(+) site; these read DFVYD and SL. Residue lysine 112 is the N6-AMP-lysine intermediate of the active site. The NAD(+) site is built by arginine 133, glutamate 167, lysine 281, and lysine 305. Residues cysteine 396, cysteine 399, cysteine 412, and cysteine 417 each coordinate Zn(2+). The region spanning 583–660 is the BRCT domain; sequence DENRLLAGKK…SFEDIKSYLN (78 aa).

This sequence belongs to the NAD-dependent DNA ligase family. LigA subfamily. Mg(2+) serves as cofactor. Mn(2+) is required as a cofactor.

The catalysed reaction is NAD(+) + (deoxyribonucleotide)n-3'-hydroxyl + 5'-phospho-(deoxyribonucleotide)m = (deoxyribonucleotide)n+m + AMP + beta-nicotinamide D-nucleotide.. In terms of biological role, DNA ligase that catalyzes the formation of phosphodiester linkages between 5'-phosphoryl and 3'-hydroxyl groups in double-stranded DNA using NAD as a coenzyme and as the energy source for the reaction. It is essential for DNA replication and repair of damaged DNA. The chain is DNA ligase from Borrelia garinii subsp. bavariensis (strain ATCC BAA-2496 / DSM 23469 / PBi) (Borreliella bavariensis).